Here is a 161-residue protein sequence, read N- to C-terminus: Nucleotide-binding protein SAR11_0692 (161 aa).

The protein belongs to the YajQ family.

Functionally, nucleotide-binding protein. This Pelagibacter ubique (strain HTCC1062) protein is Nucleotide-binding protein SAR11_0692.